We begin with the raw amino-acid sequence, 557 residues long: Pectinesterase/pectinesterase inhibitor 18 (557 aa).

The signal sequence occupies residues 1 to 34 (MSNSNQPLLSKPKSLKHKNLCLVLSFVAILGSVA). Residues 47-203 (NNDDSLLTTS…VSRARVALAI (157 aa)) form a pectinesterase inhibitor 18 region. The pectinesterase 18 stretch occupies residues 246 to 543 (NVVVAKDGTG…FTVAKLIQGG (298 aa)). Substrate contacts are provided by threonine 321 and glutamine 351. Aspartate 374 serves as the catalytic Proton donor; for pectinesterase activity. The active-site Nucleophile; for pectinesterase activity is the aspartate 395. Residues arginine 463 and tryptophan 465 each contribute to the substrate site.

It in the N-terminal section; belongs to the PMEI family. In the C-terminal section; belongs to the pectinesterase family. In terms of tissue distribution, expressed in siliques, flowers, floral stems, rosette leaves and roots.

It localises to the secreted. It is found in the cell wall. It catalyses the reaction [(1-&gt;4)-alpha-D-galacturonosyl methyl ester](n) + n H2O = [(1-&gt;4)-alpha-D-galacturonosyl](n) + n methanol + n H(+). The catalysed reaction is Endohydrolysis of the N-glycosidic bond at one specific adenosine on the 28S rRNA.. Its pathway is glycan metabolism; pectin degradation; 2-dehydro-3-deoxy-D-gluconate from pectin: step 1/5. Functionally, acts in the modification of cell walls via demethylesterification of cell wall pectin. Inhibits the elongation phase of protein synthesis. The protein is Pectinesterase/pectinesterase inhibitor 18 (PME18) of Arabidopsis thaliana (Mouse-ear cress).